A 268-amino-acid chain; its full sequence is TodF product hydratase (268 aa).

Belongs to the hydratase/decarboxylase family.

The protein operates within xenobiotic degradation; toluene degradation. In terms of biological role, converts the product of 2-hydroxy-6-oxo-2,4-heptadienoate hydrolase. This chain is TodF product hydratase (todJ), found in Pseudomonas putida (strain ATCC 700007 / DSM 6899 / JCM 31910 / BCRC 17059 / LMG 24140 / F1).